The following is a 247-amino-acid chain: 4-hydroxy-tetrahydrodipicolinate reductase (247 aa).

NAD(+) contacts are provided by residues 12-17 (GITGRM), 78-80 (GTT), and 102-105 (AANF). The active-site Proton donor/acceptor is the His-136. Position 137 (His-137) interacts with (S)-2,3,4,5-tetrahydrodipicolinate. The active-site Proton donor is the Lys-140. (S)-2,3,4,5-tetrahydrodipicolinate is bound at residue 146–147 (GT).

It belongs to the DapB family.

It is found in the cytoplasm. The catalysed reaction is (S)-2,3,4,5-tetrahydrodipicolinate + NAD(+) + H2O = (2S,4S)-4-hydroxy-2,3,4,5-tetrahydrodipicolinate + NADH + H(+). The enzyme catalyses (S)-2,3,4,5-tetrahydrodipicolinate + NADP(+) + H2O = (2S,4S)-4-hydroxy-2,3,4,5-tetrahydrodipicolinate + NADPH + H(+). It participates in amino-acid biosynthesis; L-lysine biosynthesis via DAP pathway; (S)-tetrahydrodipicolinate from L-aspartate: step 4/4. Functionally, catalyzes the conversion of 4-hydroxy-tetrahydrodipicolinate (HTPA) to tetrahydrodipicolinate. This is 4-hydroxy-tetrahydrodipicolinate reductase from Acidiphilium cryptum (strain JF-5).